The chain runs to 65 residues: Large ribosomal subunit protein uL29 (65 aa).

This sequence belongs to the universal ribosomal protein uL29 family.

This Natranaerobius thermophilus (strain ATCC BAA-1301 / DSM 18059 / JW/NM-WN-LF) protein is Large ribosomal subunit protein uL29.